The chain runs to 203 residues: Kunitz trypsin inhibitor 6 (203 aa).

The N-terminal stretch at 1 to 21 is a signal peptide; the sequence is MKTFQLMMISFLFVAITTTSG. A disulfide bond links Cys70 and Cys115. Residues Asn94, Asn127, Asn136, Asn144, and Asn197 are each glycosylated (N-linked (GlcNAc...) asparagine).

This sequence belongs to the protease inhibitor I3 (leguminous Kunitz-type inhibitor) family.

Its function is as follows. Exhibits Kunitz trypsin protease inhibitor activity. The polypeptide is Kunitz trypsin inhibitor 6 (Arabidopsis thaliana (Mouse-ear cress)).